A 512-amino-acid chain; its full sequence is Methionine--tRNA ligase (512 aa).

The 'HIGH' region motif lies at 11-21 (YYASGKPHIGH). Residues C126, C129, C143, and H147 each coordinate Zn(2+). Residues 301-305 (KMSKS) carry the 'KMSKS' region motif. K304 is a binding site for ATP.

This sequence belongs to the class-I aminoacyl-tRNA synthetase family. MetG type 2A subfamily. In terms of assembly, monomer. It depends on Zn(2+) as a cofactor.

Its subcellular location is the cytoplasm. It carries out the reaction tRNA(Met) + L-methionine + ATP = L-methionyl-tRNA(Met) + AMP + diphosphate. Its function is as follows. Is required not only for elongation of protein synthesis but also for the initiation of all mRNA translation through initiator tRNA(fMet) aminoacylation. This chain is Methionine--tRNA ligase (metG), found in Mycoplasma pneumoniae (strain ATCC 29342 / M129 / Subtype 1) (Mycoplasmoides pneumoniae).